The primary structure comprises 288 residues: Allergen Asp f 7 homolog (288 aa).

The first 20 residues, 1–20, serve as a signal peptide directing secretion; the sequence is MAPQFLKALTVATALGATLA. Low complexity-rich tracts occupy residues 48–107 and 117–129; these read TVHG…SSSV and TTST…TTST. The tract at residues 48 to 161 is disordered; sequence TVHGTPGPDY…PPVVSIPPIG (114 aa). Residues 130 to 151 show a composition bias toward pro residues; that stretch reads TPPPPPPAMTTPPPPPPPPATK. A glycan (N-linked (GlcNAc...) asparagine) is linked at Asn268.

It is found in the secreted. The protein is Allergen Asp f 7 homolog of Arthroderma benhamiae (strain ATCC MYA-4681 / CBS 112371) (Trichophyton mentagrophytes).